The following is an 862-amino-acid chain: Probable alpha,alpha-trehalose-phosphate synthase [UDP-forming] 11 (862 aa).

Ser-5 carries the post-translational modification Phosphoserine. The segment at 50–538 (PKRIVVSNQL…ARSYDQDLQR (489 aa)) is glycosyltransferase. The tract at residues 838 to 862 (SKHEQQKKQSKFTFQQPMGQCRKKA) is disordered.

In the N-terminal section; belongs to the glycosyltransferase 20 family. It in the C-terminal section; belongs to the trehalose phosphatase family. In terms of tissue distribution, expressed in leaves, roots, stems and flowers.

The enzyme catalyses D-glucose 6-phosphate + UDP-alpha-D-glucose = alpha,alpha-trehalose 6-phosphate + UDP + H(+). This Arabidopsis thaliana (Mouse-ear cress) protein is Probable alpha,alpha-trehalose-phosphate synthase [UDP-forming] 11 (TPS11).